Here is a 422-residue protein sequence, read N- to C-terminus: Adenylosuccinate synthetase (422 aa).

GTP contacts are provided by residues 11–17 (GDEGKGK) and 39–41 (GHT). The active-site Proton acceptor is aspartate 12. Positions 12 and 39 each coordinate Mg(2+). Residues 12–15 (DEGK), 37–40 (NAGH), threonine 129, arginine 143, asparagine 220, threonine 235, and arginine 299 contribute to the IMP site. Histidine 40 (proton donor) is an active-site residue. 295–301 (VTTGRKR) is a binding site for substrate. Residues arginine 301, 327 to 329 (KLD), and 410 to 412 (GTG) contribute to the GTP site.

This sequence belongs to the adenylosuccinate synthetase family. In terms of assembly, homodimer. The cofactor is Mg(2+).

It is found in the cytoplasm. The enzyme catalyses IMP + L-aspartate + GTP = N(6)-(1,2-dicarboxyethyl)-AMP + GDP + phosphate + 2 H(+). It functions in the pathway purine metabolism; AMP biosynthesis via de novo pathway; AMP from IMP: step 1/2. Its function is as follows. Plays an important role in the de novo pathway and in the salvage pathway of purine nucleotide biosynthesis. Catalyzes the first committed step in the biosynthesis of AMP from IMP. The chain is Adenylosuccinate synthetase from Arthroderma otae (strain ATCC MYA-4605 / CBS 113480) (Microsporum canis).